The chain runs to 557 residues: Formate--tetrahydrofolate ligase (557 aa).

Position 65–72 (65–72) interacts with ATP; the sequence is TPAGEGKT.

The protein belongs to the formate--tetrahydrofolate ligase family.

It catalyses the reaction (6S)-5,6,7,8-tetrahydrofolate + formate + ATP = (6R)-10-formyltetrahydrofolate + ADP + phosphate. Its pathway is one-carbon metabolism; tetrahydrofolate interconversion. In Acidiphilium cryptum (strain JF-5), this protein is Formate--tetrahydrofolate ligase.